The chain runs to 138 residues: Large ribosomal subunit protein uL16 (138 aa).

The segment covering 1-16 (MLIPKRVKYRRQHRPT) has biased composition (basic residues). Residues 1–23 (MLIPKRVKYRRQHRPTRSGVSKG) form a disordered region.

Belongs to the universal ribosomal protein uL16 family. As to quaternary structure, part of the 50S ribosomal subunit.

Its function is as follows. Binds 23S rRNA and is also seen to make contacts with the A and possibly P site tRNAs. The chain is Large ribosomal subunit protein uL16 from Corynebacterium aurimucosum (strain ATCC 700975 / DSM 44827 / CIP 107346 / CN-1) (Corynebacterium nigricans).